We begin with the raw amino-acid sequence, 970 residues long: MAQLERSAISGFSSKSRRNSFAYDVKREVYNEETFQQEHKRKASSSGNMNINITTFRHHVQCRCSWHRFLRCVLTIFPFLEWMCMYRLKDWLLGDLLAGISVGLVQVPQGLTLSLLARQLIPPLNIAYAAFCSSVIYVIFGSCHQMSIGSFFLVSALLINVLKVSPFNNGQLVMGSFVKNEFSAPSYLMGYNKSLSVVATTTFLTGIIQLIMGVLGLGFIATYLPESAMSAYLAAVALHIMLSQLTFIFGIMISFHAGPISFFYDIINYCVALPKANSTSILVFLTVVVALRINKCIRISFNQYPIEFPMELFLIIGFTVIANKISMATETSQTLIDMIPYSFLLPVTPDFSLLPKIILQAFSLSLVSSFLLIFLGKKIASLHNYSVNSNQDLIAIGLCNVVSSFFRSCVFTGAIARTIIQDKSGGRQQFASLVGAGVMLLLMVKMGHFFYTLPNAVLAGIILSNVIPYLETISNLPSLWRQDQYDCALWMMTFSSSIFLGLDIGLIISVVSAFFITTVRSHRAKILLLGQIPNTNIYRSINDYREIITIPGVKIFQCCSSITFVNVYYLKHKLLKEVDMVKVPLKEEEIFSLFNSSDTNLQGGKICRCFCNCDDLEPLPRILYTERFENKLDPEASSINLIHCSHFESMNTSQTASEDQVPYTVSSVSQKNQGQQYEEVEEVWLPNNSSRNSSPGLPDVAESQGRRSLIPYSDASLLPSVHTIILDFSMVHYVDSRGLVVLRQICNAFQNANILILIAGCHSSIVRAFERNDFFDAGITKTQLFLSVHDAVLFALSRKVIGSSELSIDESETVIRETYSETDKNDNSRYKMSSSFLGSQKNVSPGFIKIQQPVEEESELDLELESEQEAGLGLDLDLDRELEPEMEPKAETETKTQTEMEPQPETEPEMEPNPKSRPRAHTFPQQRYWPMYHPSMASTQSQTQTRTWSVERRRHPMDSYSPEGNSNEDV.

Residues 1–95 (MAQLERSAIS…YRLKDWLLGD (95 aa)) lie on the Cytoplasmic side of the membrane. The chain crosses the membrane as a helical span at residues 96–116 (LLAGISVGLVQVPQGLTLSLL). Residues 117–119 (ARQ) are Extracellular-facing. A helical transmembrane segment spans residues 120–140 (LIPPLNIAYAAFCSSVIYVIF). Residues 141 to 146 (GSCHQM) lie on the Cytoplasmic side of the membrane. Residues 147–167 (SIGSFFLVSALLINVLKVSPF) traverse the membrane as a helical segment. The Extracellular segment spans residues 168-202 (NNGQLVMGSFVKNEFSAPSYLMGYNKSLSVVATTT). N-linked (GlcNAc...) asparagine glycosylation is present at Asn-192. A helical transmembrane segment spans residues 203–223 (FLTGIIQLIMGVLGLGFIATY). Residues 224 to 232 (LPESAMSAY) are Cytoplasmic-facing. Residues 233-253 (LAAVALHIMLSQLTFIFGIMI) traverse the membrane as a helical segment. Over 254 to 270 (SFHAGPISFFYDIINYC) the chain is Extracellular. The helical transmembrane segment at 271 to 291 (VALPKANSTSILVFLTVVVAL) threads the bilayer. Residues 292–307 (RINKCIRISFNQYPIE) lie on the Cytoplasmic side of the membrane. A helical transmembrane segment spans residues 308-328 (FPMELFLIIGFTVIANKISMA). The Extracellular portion of the chain corresponds to 329-355 (TETSQTLIDMIPYSFLLPVTPDFSLLP). A helical transmembrane segment spans residues 356–376 (KIILQAFSLSLVSSFLLIFLG). Over 377–392 (KKIASLHNYSVNSNQD) the chain is Cytoplasmic. A helical membrane pass occupies residues 393–413 (LIAIGLCNVVSSFFRSCVFTG). Residues 414 to 429 (AIARTIIQDKSGGRQQ) lie on the Extracellular side of the membrane. The chain crosses the membrane as a helical span at residues 430-450 (FASLVGAGVMLLLMVKMGHFF). Over 451 to 452 (YT) the chain is Cytoplasmic. A helical transmembrane segment spans residues 453–473 (LPNAVLAGIILSNVIPYLETI). The Extracellular segment spans residues 474–497 (SNLPSLWRQDQYDCALWMMTFSSS). The helical transmembrane segment at 498-518 (IFLGLDIGLIISVVSAFFITT) threads the bilayer. Over 519–970 (VRSHRAKILL…SPEGNSNEDV (452 aa)) the chain is Cytoplasmic. An STAS domain is found at 543-795 (DYREIITIPG…LSVHDAVLFA (253 aa)). The segment at 664 to 970 (TVSSVSQKNQ…SPEGNSNEDV (307 aa)) is interaction with RACGAP1. Residues 858–868 (SELDLELESEQ) show a composition bias toward acidic residues. The segment at 858–970 (SELDLELESE…SPEGNSNEDV (113 aa)) is disordered. Over residues 877-898 (DLDRELEPEMEPKAETETKTQT) the composition is skewed to basic and acidic residues. The segment covering 938 to 948 (STQSQTQTRTW) has biased composition (low complexity).

It belongs to the SLC26A/SulP transporter (TC 2.A.53) family. As to quaternary structure, interacts with RACGAP1. Interacts with CFTR; stimulates anion transport activity of CFTR. In terms of processing, N-glycosylated. In terms of tissue distribution, expression observed exclusively in testis, restricted to the meiotic phase of the germ cell. Abundant expression located in the seminiferous tubules, concentrated on the luminal side of the tubuli harboring the spermatocytes and spermatids.

Its subcellular location is the membrane. The enzyme catalyses sulfate(out) + chloride(in) = sulfate(in) + chloride(out). It carries out the reaction oxalate(in) + chloride(out) = oxalate(out) + chloride(in). Its activity is regulated as follows. Activity is inhibited by 4,4'-Di-isothiocyanatostilbene-2,2'-disulfonic acid (DIDS - an inhibitor of several anion channels and transporters) and gluconate. In terms of biological role, antiporter that mediates the exchange of sulfate and oxalate against chloride ions across a membrane. Stimulates anion transport activity of CFTR. May cooperate with CFTR in the regulation of chloride and bicarbonate ions fluxes required for activation of the ADCY10/PKA pathway during sperm motility and sperm capacitation. May play a role in sperm tail differentiation and motility and hence male fertility. The polypeptide is Testis anion transporter 1 (Homo sapiens (Human)).